Consider the following 350-residue polypeptide: MAEFIRAQIFGTTFEITSRYTDLQPVGMGAFGLVCSAKDQLTGQPVAIKKIMKPFSTPVLSKRTYRELKLLKHLKHENVISLSDIFISPLEDIYFVTELLGTDLHRLLTSRPLEKQFIQYFLYQILRGLKYVHSAGVIHRDLKPSNILVNENCDLKICDFGLARIQDPQMTGYVSTRYYRAPEIMLTWQKYDVEVDIWSAGCIFAEMLEGKPLFPGKDHVNQFSIITELLGSPPEDVIHTICSENTLRFVQSLPKRERIPLSQKFKNADPAAVDLLERMLVFDPKKRISAAQALAHEYLAPYHDPSDEPVAAEKFDWSFNDADLPVDTWKIMMYSEILDYHNVDQNDTPL.

The Protein kinase domain maps to 20–299 (YTDLQPVGMG…AAQALAHEYL (280 aa)). Residues 26–34 (VGMGAFGLV) and K49 contribute to the ATP site. Catalysis depends on D141, which acts as the Proton acceptor. The short motif at 171–173 (TGY) is the TXY element.

This sequence belongs to the protein kinase superfamily. Ser/Thr protein kinase family. MAP kinase subfamily. HOG1 sub-subfamily. The cofactor is Mg(2+).

Its subcellular location is the cytoplasm. The protein localises to the nucleus. The catalysed reaction is L-seryl-[protein] + ATP = O-phospho-L-seryl-[protein] + ADP + H(+). The enzyme catalyses L-threonyl-[protein] + ATP = O-phospho-L-threonyl-[protein] + ADP + H(+). Functionally, proline-directed serine/threonine-protein kinase involved in a signal transduction pathway that is activated by changes in the osmolarity of the extracellular environment. Controls osmotic regulation of transcription of target genes. Involved in environmental stress response. Via the downstream MSN2 transcription factor, may play roles in the regulation of growth, conidiation, trap development, fatty acid metabolism and secondary metabolites biosynthesis. The polypeptide is Mitogen-activated protein kinase HOG1 (Arthrobotrys oligospora (strain ATCC 24927 / CBS 115.81 / DSM 1491) (Nematode-trapping fungus)).